A 222-amino-acid polypeptide reads, in one-letter code: Small ribosomal subunit protein eS8z (222 aa).

Disordered stretches follow at residues 1-37 (MGIS…ANTK) and 125-147 (KKKS…VAAP). A compositionally biased stretch (basic residues) spans 8–26 (IHKRRATGGKQKQWRKKRK).

It belongs to the eukaryotic ribosomal protein eS8 family.

This Arabidopsis thaliana (Mouse-ear cress) protein is Small ribosomal subunit protein eS8z (RPS8A).